Consider the following 596-residue polypeptide: Phosphoenolpyruvate carboxykinase [GTP] (596 aa).

Residues Arg-77 and 205–207 contribute to the substrate site; that span reads YGG. 2 residues coordinate Mn(2+): Lys-214 and His-234. Residue Ser-256 coordinates substrate. Residue 257–262 participates in GTP binding; that stretch reads ACGKTN. Cys-258 is an active-site residue. Asp-283 is a Mn(2+) binding site. Residues 362 to 388 are disordered; the sequence is KKGSTEKAAHPNSRFTAPAKNNPAISP. 373–375 is a binding site for substrate; it reads NSR. Residues Arg-375, Arg-406, and 499–502 each bind GTP; that span reads YGDN.

This sequence belongs to the phosphoenolpyruvate carboxykinase [GTP] family. Monomer. Mn(2+) is required as a cofactor.

Its subcellular location is the cytoplasm. The catalysed reaction is oxaloacetate + GTP = phosphoenolpyruvate + GDP + CO2. It participates in carbohydrate biosynthesis; gluconeogenesis. Functionally, catalyzes the conversion of oxaloacetate (OAA) to phosphoenolpyruvate (PEP), the rate-limiting step in the metabolic pathway that produces glucose from lactate and other precursors derived from the citric acid cycle. This is Phosphoenolpyruvate carboxykinase [GTP] from Anaeromyxobacter dehalogenans (strain 2CP-C).